We begin with the raw amino-acid sequence, 361 residues long: Phospho-N-acetylmuramoyl-pentapeptide-transferase (361 aa).

A run of 10 helical transmembrane segments spans residues 21 to 41, 69 to 89, 93 to 113, 131 to 151, 168 to 188, 200 to 220, 240 to 260, 264 to 284, 289 to 309, and 338 to 358; these read YLTI…LMLG, VGTP…SILI, WSNI…AIGF, SIKF…IILI, IILP…IVGS, GLAI…AYFS, LFII…FNAY, IFMG…IAIL, ILLF…IIQV, and KIIV…LASI.

Belongs to the glycosyltransferase 4 family. MraY subfamily. Mg(2+) serves as cofactor.

It localises to the cell inner membrane. The catalysed reaction is UDP-N-acetyl-alpha-D-muramoyl-L-alanyl-gamma-D-glutamyl-meso-2,6-diaminopimeloyl-D-alanyl-D-alanine + di-trans,octa-cis-undecaprenyl phosphate = di-trans,octa-cis-undecaprenyl diphospho-N-acetyl-alpha-D-muramoyl-L-alanyl-D-glutamyl-meso-2,6-diaminopimeloyl-D-alanyl-D-alanine + UMP. Its pathway is cell wall biogenesis; peptidoglycan biosynthesis. Functionally, catalyzes the initial step of the lipid cycle reactions in the biosynthesis of the cell wall peptidoglycan: transfers peptidoglycan precursor phospho-MurNAc-pentapeptide from UDP-MurNAc-pentapeptide onto the lipid carrier undecaprenyl phosphate, yielding undecaprenyl-pyrophosphoryl-MurNAc-pentapeptide, known as lipid I. This Vesicomyosocius okutanii subsp. Calyptogena okutanii (strain HA) protein is Phospho-N-acetylmuramoyl-pentapeptide-transferase.